The sequence spans 4981 residues: Protocadherin Fat 4 (4981 aa).

An N-terminal signal peptide occupies residues 1 to 38; that stretch reads MDLAPDRATGRPWLPLHTLSVSQLLRVFWLLSLLPGQA. Topologically, residues 39–4504 are extracellular; sequence WVHGAEPRQV…PEEISLPLWA (4466 aa). Cadherin domains are found at residues 43-135, 136-250, 251-353, 359-475, 476-582, 584-689, 690-793, 794-893, 894-996, 997-1100, 1101-1210, 1211-1315, 1316-1420, 1421-1529, 1529-1629, 1630-1740, 1741-1841, 1842-1944, 1945-2051, 2051-2154, 2155-2259, 2260-2364, 2365-2466, 2467-2567, 2568-2669, 2670-2773, 2773-2872, 2873-2983, 2984-3089, 3090-3194, 3195-3298, 3299-3404, 3405-3510, and 3509-3620; these read AEPR…APVF, PDPS…PPVF, GSSH…DPVV, PATS…PPVF, SQQV…KPVF, QPEG…SPVF, YPVQ…PPVF, SQVA…SPHF, LQAI…SPVF, DQLS…RPLF, NSTN…APKF, LKDF…TPSF, PKST…PPSF, PPGD…VPMF, FISQ…GPVF, TQPK…PPVF, PTDM…TPKF, SRPV…PPIF, SLNS…PPTF, FLSP…NPIF, AQAL…VPVF, ELSP…VPTF, ASKA…PPRF, QHHP…FPKV, RAKE…APIF, KEDP…APRF, FSQI…APRF, SRTS…APQF, LKSK…TPEF, SQSH…SPVF, LSDD…VPRF, VSKL…PPIF, TLNI…GPML, and MLTV…VEIF. Residues Asn-84 and Asn-237 are each glycosylated (N-linked (GlcNAc...) asparagine). Asn-393, Asn-416, Asn-435, Asn-483, Asn-551, Asn-615, Asn-676, Asn-721, Asn-825, Asn-880, Asn-946, Asn-1085, Asn-1101, Asn-1104, Asn-1225, Asn-1296, Asn-1389, and Asn-1514 each carry an N-linked (GlcNAc...) asparagine glycan. 4 N-linked (GlcNAc...) asparagine glycosylation sites follow: Asn-1828, Asn-1899, Asn-1967, and Asn-2119. N-linked (GlcNAc...) asparagine glycosylation is found at Asn-2387 and Asn-2430. 7 N-linked (GlcNAc...) asparagine glycosylation sites follow: Asn-2921, Asn-2937, Asn-3036, Asn-3140, Asn-3217, Asn-3392, and Asn-3477. Residues Asn-3706 and Asn-3758 are each glycosylated (N-linked (GlcNAc...) asparagine). The EGF-like 1 domain occupies 3802-3860; that stretch reads DHDSCVHGPCQNGGSCLRRLAVSSVLKSRESLPVIIVANEPLQPFLCKCLPGYAGSWCE. Cystine bridges form between Cys-3806/Cys-3817, Cys-3811/Cys-3848, Cys-3850/Cys-3859, Cys-3866/Cys-3877, Cys-3871/Cys-3886, Cys-3888/Cys-3897, Cys-3904/Cys-3915, Cys-3909/Cys-3924, Cys-3926/Cys-3935, Cys-3942/Cys-3953, Cys-3947/Cys-3962, and Cys-3964/Cys-3973. Residues 3862 to 3898 enclose the EGF-like 2; calcium-binding domain; that stretch reads DIDECLPSPCHSGGTCHNLVGGFSCSCPDGFTGRACE. The EGF-like 3; calcium-binding domain occupies 3900 to 3936; sequence DINECLQSPCKNGAICQNFPGSFNCVCKTGYTGKMCE. Residues 3938-3974 enclose the EGF-like 4 domain; that stretch reads SVNYCECNPCFNGGSCQSGVDSYYCHCPFGVFGKHCE. The region spanning 3975–4159 is the Laminin G-like 1 domain; sequence LNSYGFEELS…LAAQGILDQC (185 aa). Asn-4017 carries an N-linked (GlcNAc...) asparagine glycan. Intrachain disulfides connect Cys-4133/Cys-4159, Cys-4166/Cys-4177, Cys-4171/Cys-4186, and Cys-4188/Cys-4197. Residues 4162–4198 form the EGF-like 5 domain; sequence LEGACTRSPCQHGGTCMDYWSWQQCHCKEGLTGKYCE. In terms of domain architecture, Laminin G-like 2 spans 4217–4398; the sequence is YHMSQNEKRE…KTDPSVKIGC (182 aa). N-linked (GlcNAc...) asparagine glycosylation is found at Asn-4267 and Asn-4312. Disulfide bonds link Cys-4365/Cys-4398, Cys-4430/Cys-4441, Cys-4435/Cys-4451, and Cys-4453/Cys-4462. The EGF-like 6 domain occupies 4426–4463; it reads PPGDCASHPCQNGGSCEPGLHSGFTCSCPDSHTGRTCE. A helical membrane pass occupies residues 4505 to 4525; the sequence is VPAIVGSCATVLALLVLSLIL. Topologically, residues 4526-4981 are cytoplasmic; sequence CNQCRGKKAK…PKDGEAEQYV (456 aa). 5 disordered regions span residues 4534–4584, 4680–4713, 4752–4856, 4869–4911, and 4957–4981; these read AKNP…PDII, QGLRTSSLSHSACPTPNPLSRHSPAPFSKSSTFY, RSKS…MEYD, KLSQ…AAPG, and AAANEEGKAGTTKPVPKDGEAEQYV. Over residues 4680 to 4699 the composition is skewed to polar residues; that stretch reads QGLRTSSLSHSACPTPNPLS. A necessary and sufficient for interaction with MPDZ region spans residues 4706–4795; the sequence is FSKSSTFYRN…GLSIEEVERL (90 aa). The segment covering 4809–4821 has biased composition (basic and acidic residues); that stretch reads DHGRSSSEEDCRR. Ser-4876 is subject to Phosphoserine. Residues 4971-4981 are compositionally biased toward basic and acidic residues; sequence VPKDGEAEQYV.

Heterophilic interaction with DCHS1; this interaction affects their respective protein levels. Interacts (via cytoplasmic domain) with MPDZ. Forms a complex with PALS1 and MPDZ. In terms of tissue distribution, widely expressed. Expressed in fetal brain, infant brain, brain tumor and colorectal cancer.

The protein localises to the membrane. Cadherins are calcium-dependent cell adhesion proteins. FAT4 plays a role in the maintenance of planar cell polarity as well as in inhibition of YAP1-mediated neuroprogenitor cell proliferation and differentiation. The sequence is that of Protocadherin Fat 4 (FAT4) from Homo sapiens (Human).